Here is a 328-residue protein sequence, read N- to C-terminus: Ribosomal RNA small subunit methyltransferase H (328 aa).

S-adenosyl-L-methionine contacts are provided by residues 37-39 (GGH), Asp57, Phe83, Asp104, and Gln111.

It belongs to the methyltransferase superfamily. RsmH family.

The protein resides in the cytoplasm. The catalysed reaction is cytidine(1402) in 16S rRNA + S-adenosyl-L-methionine = N(4)-methylcytidine(1402) in 16S rRNA + S-adenosyl-L-homocysteine + H(+). Its function is as follows. Specifically methylates the N4 position of cytidine in position 1402 (C1402) of 16S rRNA. The polypeptide is Ribosomal RNA small subunit methyltransferase H (Neisseria meningitidis serogroup B (strain ATCC BAA-335 / MC58)).